Here is a 294-residue protein sequence, read N- to C-terminus: Ribosomal protein L11 methyltransferase (294 aa).

S-adenosyl-L-methionine contacts are provided by Thr-145, Gly-167, Asp-189, and Asn-230.

It belongs to the methyltransferase superfamily. PrmA family.

Its subcellular location is the cytoplasm. The catalysed reaction is L-lysyl-[protein] + 3 S-adenosyl-L-methionine = N(6),N(6),N(6)-trimethyl-L-lysyl-[protein] + 3 S-adenosyl-L-homocysteine + 3 H(+). Methylates ribosomal protein L11. This chain is Ribosomal protein L11 methyltransferase, found in Alkalilimnicola ehrlichii (strain ATCC BAA-1101 / DSM 17681 / MLHE-1).